We begin with the raw amino-acid sequence, 430 residues long: Asparagine--tRNA ligase (430 aa).

The protein belongs to the class-II aminoacyl-tRNA synthetase family. In terms of assembly, homodimer.

It is found in the cytoplasm. The enzyme catalyses tRNA(Asn) + L-asparagine + ATP = L-asparaginyl-tRNA(Asn) + AMP + diphosphate + H(+). This Listeria monocytogenes serotype 4b (strain F2365) protein is Asparagine--tRNA ligase.